The following is a 302-amino-acid chain: Late embryogenesis abundant protein D-29 (302 aa).

Disordered stretches follow at residues 25 to 93 (HMPS…AKEY), 168 to 193 (VKNA…LADS), and 205 to 302 (AKEK…NHKN). Composition is skewed to basic and acidic residues over residues 34 to 70 (RDYS…HAAN) and 79 to 93 (AKDR…AKEY). Basic and acidic residues predominate over residues 205–286 (AKEKVRDMAD…KAEETIESAK (82 aa)).

It belongs to the LEA type 1 family.

Its function is as follows. LEA protein are late embryonic proteins abundant in higher plant seed embryos. There are two subsets of LEA proteins (5a and 5b), the first ones are expressed when the cotyledon weight reach 80 mg and the second set are expressed above 100 mg. The function of those proteins is not known. In Gossypium hirsutum (Upland cotton), this protein is Late embryogenesis abundant protein D-29.